The following is a 261-amino-acid chain: GTP cyclohydrolase FolE2 (261 aa).

The protein belongs to the GTP cyclohydrolase IV family.

It catalyses the reaction GTP + H2O = 7,8-dihydroneopterin 3'-triphosphate + formate + H(+). It functions in the pathway cofactor biosynthesis; 7,8-dihydroneopterin triphosphate biosynthesis; 7,8-dihydroneopterin triphosphate from GTP: step 1/1. Its function is as follows. Converts GTP to 7,8-dihydroneopterin triphosphate. In Geobacter metallireducens (strain ATCC 53774 / DSM 7210 / GS-15), this protein is GTP cyclohydrolase FolE2.